The following is a 236-amino-acid chain: Probable calcium-binding protein CML30 (236 aa).

The tract at residues 43 to 64 (VVVVAKKRPEEEPRRPDPDADL) is disordered. The segment covering 49-60 (KRPEEEPRRPDP) has biased composition (basic and acidic residues). EF-hand domains follow at residues 59 to 94 (DPDA…LGIA) and 96 to 131 (SSAA…IPKR). 8 residues coordinate Ca(2+): aspartate 72, aspartate 74, aspartate 76, glutamate 83, aspartate 109, asparagine 111, aspartate 113, and glutamate 120. Positions 130-158 (KRRKSHQQHPLPSTAAADEEAAAADEEYE) are disordered. Residues 146–158 (ADEEAAAADEEYE) are compositionally biased toward acidic residues. 2 consecutive EF-hand domains span residues 161 to 196 (EEER…LGLR) and 202 to 236 (PAVA…VVKA). 9 residues coordinate Ca(2+): aspartate 174, asparagine 176, aspartate 178, glutamate 185, aspartate 215, aspartate 217, aspartate 219, methionine 221, and glutamate 226.

Potential calcium sensor. The protein is Probable calcium-binding protein CML30 (CML30) of Oryza sativa subsp. japonica (Rice).